A 376-amino-acid chain; its full sequence is Chaperone protein DnaJ 2 (376 aa).

Residues 5 to 70 form the J domain; that stretch reads DYYEVLGVNR…QKRAAYDRYG (66 aa). Residues 135–213 form a CR-type zinc finger; it reads GADKTIRIPT…CGGAGRVKRQ (79 aa). Zn(2+) contacts are provided by cysteine 148, cysteine 151, cysteine 165, cysteine 168, cysteine 187, cysteine 190, cysteine 201, and cysteine 204. 4 CXXCXGXG motif repeats span residues 148–155, 165–172, 187–194, and 201–208; these read CETCHGSG, CPTCGGAG, CPKCHGTG, and CRDCGGAG.

The protein belongs to the DnaJ family. Homodimer. Zn(2+) is required as a cofactor.

It localises to the cytoplasm. Its function is as follows. Participates actively in the response to hyperosmotic and heat shock by preventing the aggregation of stress-denatured proteins and by disaggregating proteins, also in an autonomous, DnaK-independent fashion. Unfolded proteins bind initially to DnaJ; upon interaction with the DnaJ-bound protein, DnaK hydrolyzes its bound ATP, resulting in the formation of a stable complex. GrpE releases ADP from DnaK; ATP binding to DnaK triggers the release of the substrate protein, thus completing the reaction cycle. Several rounds of ATP-dependent interactions between DnaJ, DnaK and GrpE are required for fully efficient folding. Also involved, together with DnaK and GrpE, in the DNA replication of plasmids through activation of initiation proteins. In Aromatoleum aromaticum (strain DSM 19018 / LMG 30748 / EbN1) (Azoarcus sp. (strain EbN1)), this protein is Chaperone protein DnaJ 2.